A 273-amino-acid polypeptide reads, in one-letter code: Orotidine 5'-phosphate decarboxylase (273 aa).

Lys96 acts as the Proton donor in catalysis.

The protein belongs to the OMP decarboxylase family. Type 2 subfamily.

The enzyme catalyses orotidine 5'-phosphate + H(+) = UMP + CO2. Its pathway is pyrimidine metabolism; UMP biosynthesis via de novo pathway; UMP from orotate: step 2/2. The protein is Orotidine 5'-phosphate decarboxylase of Nocardioides sp. (strain ATCC BAA-499 / JS614).